The following is a 94-amino-acid chain: uncharacterized protein (94 aa).

This is an uncharacterized protein from Treponema pallidum (strain Nichols).